A 263-amino-acid polypeptide reads, in one-letter code: CRISPR-associated protein Cas5 2 (263 aa).

This sequence belongs to the CRISPR-associated protein Cas5 family. Subtype I-A/Apern subfamily. In terms of assembly, part of the aCascade ribonucleoprotein complex, minimally composed of Csa2 and Cas5a, which binds crRNA. Other possible components of aCascade in strain P1 are Cas6b (SSO1437) and Csa5 (SSO1443), while SSO1399, Cas5b (SSO1400) and SSO1401 have sometimes been seen weakly associated. Csa2 is probably the major RNA-binding subunit. The Csa2-Cas5a-crRNA complex also binds target DNA homologous to crRNA, probably forming an R-loop. Purified aCascade forms a filament about 6 nm in width.

Its function is as follows. CRISPR (clustered regularly interspaced short palindromic repeat) is an adaptive immune system that provides protection against mobile genetic elements (viruses, transposable elements and conjugative plasmids). CRISPR clusters contain spacers, sequences complementary to antecedent mobile elements, and target invading nucleic acids. CRISPR clusters are transcribed and processed into CRISPR RNA (crRNA). The sequence is that of CRISPR-associated protein Cas5 2 (cas5b) from Saccharolobus solfataricus (strain ATCC 35092 / DSM 1617 / JCM 11322 / P2) (Sulfolobus solfataricus).